A 341-amino-acid polypeptide reads, in one-letter code: Protein YIPF3 (341 aa).

Over 1–146 (MANSSGSSRN…PVKMISFPQK (146 aa)) the chain is Cytoplasmic. Positions 26–46 (GGGAAVIDMENMDDTSGSSFE) are disordered. Residues 147 to 167 (IAGELYGPLMLVFTMVAILLH) form a helical membrane-spanning segment. Residues 168–185 (GMKSSGTIIREGTLMGTA) lie on the Lumenal side of the membrane. Residues 186-206 (IGTCFGYWLGVSSFIYFLAYL) form a helical membrane-spanning segment. Over 207–212 (CNAQIT) the chain is Cytoplasmic. The helical transmembrane segment at 213-233 (MLQTLSLLGYGLFGHCIVLFI) threads the bilayer. Over 234 to 242 (TYNIHFHSL) the chain is Lumenal. The helical transmembrane segment at 243 to 263 (FYIFWLCIGGLSTLRMVAVLL) threads the bilayer. Residues 264–272 (SRTVGHTQR) lie on the Cytoplasmic side of the membrane. Residues 273–293 (LIVCGTMAALHMLFLLYLHFA) traverse the membrane as a helical segment. The Lumenal portion of the chain corresponds to 294-341 (YHKVVEGILDTLDGQNVPLPIQRVARDLPVGPNTVLNATVQVLLAHSR). The N-linked (GlcNAc...) asparagine glycan is linked to Asn330.

This sequence belongs to the YIP1 family.

It localises to the cell membrane. Its subcellular location is the golgi apparatus. The protein localises to the cis-Golgi network membrane. It is found in the cytoplasm. Functionally, involved in the maintenance of the Golgi structure. May play a role in hematopoiesis. This chain is Protein YIPF3 (yipf3), found in Xenopus laevis (African clawed frog).